The primary structure comprises 147 residues: Small ribosomal subunit protein uS5 (147 aa).

The S5 DRBM domain maps to 9 to 72; sequence FEEVIVDIGR…DDAFKNIIHV (64 aa).

This sequence belongs to the universal ribosomal protein uS5 family. In terms of assembly, part of the 30S ribosomal subunit. Contacts proteins S4 and S8.

With S4 and S12 plays an important role in translational accuracy. Its function is as follows. Located at the back of the 30S subunit body where it stabilizes the conformation of the head with respect to the body. In Campylobacter curvus (strain 525.92), this protein is Small ribosomal subunit protein uS5.